Reading from the N-terminus, the 2191-residue chain is Genome polyprotein (2191 aa).

A lipid anchor (N-myristoyl glycine; by host) is attached at Gly-2. Over 2 to 1501 (GAQVSTQKTG…HVSRAFICLQ (1500 aa)) the chain is Cytoplasmic. The segment at 566–582 (FYQNDVQNAVERSIVRV) is amphipathic alpha-helix. Catalysis depends on for protease 2A activity residues His-878 and Asp-896. Zn(2+)-binding residues include Cys-913 and Cys-915. Cys-967 functions as the For protease 2A activity in the catalytic mechanism. Residues Cys-973 and His-975 each contribute to the Zn(2+) site. A membrane-binding region spans residues 1107-1179 (NNGWLKKFTE…EQSAPSQSDQ (73 aa)). Positions 1107 to 1245 (NNGWLKKFTE…SPGVGKSVAT (139 aa)) are oligomerization. Positions 1128-1132 (AIKIQ) are RNA-binding. An SF3 helicase domain is found at 1211–1367 (EKKMSNYIQF…SMYNQNGKIN (157 aa)). Zn(2+)-binding residues include Cys-1375, Cys-1387, and Cys-1392. The segment at 1375-1392 (CDEECCPVNFKKCCPLVC) adopts a C4-type; degenerate zinc-finger fold. Positions 1419–1426 (EYNHRHSV) are RNA-binding. Positions 1430–1435 (LEALFQ) are oligomerization. An intramembrane segment occupies 1502–1517 (ALTTFVSVAGIIYIIY). Topologically, residues 1518–2191 (KLFAGFQGAY…TLRRKWLDSF (674 aa)) are cytoplasmic. At Tyr-1527 the chain carries O-(5'-phospho-RNA)-tyrosine. A Peptidase C3 domain is found at 1547 to 1725 (GPAFEFAVAM…FSAALLKHYF (179 aa)). Residues His-1586, Glu-1617, and Cys-1693 each act as for protease 3C activity in the active site. Residues 1956–2072 (GHLIAFDYSG…SYPWPIDASL (117 aa)) form the RdRp catalytic domain. Mg(2+)-binding residues include Asp-1962 and Asp-2058.

The protein belongs to the picornaviruses polyprotein family. As to quaternary structure, interacts with capsid protein VP1 and capsid protein VP3 to form heterotrimeric protomers. Interacts with capsid protein VP0, and capsid protein VP3 to form heterotrimeric protomers. Five protomers subsequently associate to form pentamers which serve as building blocks for the capsid. Interacts with capsid protein VP2, capsid protein VP3 and capsid protein VP4 following cleavage of capsid protein VP0. Interacts with host CD55 and FCGRT; these interactions promote virus attachment to the host cell and subsequent internalization. In terms of assembly, interacts with capsid protein VP1 and capsid protein VP3 in the mature capsid. Interacts with host CD55 and FCGRT; these interactions promote virus attachment to the host cell and subsequent internalization. As to quaternary structure, interacts with capsid protein VP0 and capsid protein VP1 to form heterotrimeric protomers. Five protomers subsequently associate to form pentamers which serve as building blocks for the capsid. Interacts with capsid protein VP4 in the mature capsid. Interacts with protein 2C; this interaction may be important for virion morphogenesis. Interacts with host FCGRT; this interaction promotes virus attachment to the host cell and subsequent internalization. Interacts with capsid protein VP1 and capsid protein VP3. In terms of assembly, homodimer. As to quaternary structure, homohexamer; forms a hexameric ring structure with 6-fold symmetry characteristic of AAA+ ATPases. Interacts (via N-terminus) with host RTN3 (via reticulon domain); this interaction is important for viral replication. Interacts with capsid protein VP3; this interaction may be important for virion morphogenesis. Interacts with protein 3CD. In terms of assembly, homodimer. Interacts with host GBF1. Interacts (via GOLD domain) with host ACBD3 (via GOLD domain); this interaction allows the formation of a viral protein 3A/ACBD3 heterotetramer with a 2:2 stoichiometry, which will stimulate the recruitment of host PI4KB in order to synthesize PI4P at the viral RNA replication sites. As to quaternary structure, interacts with RNA-directed RNA polymerase. Interacts with protein 3AB and with RNA-directed RNA polymerase. In terms of assembly, interacts with Viral protein genome-linked and with protein 3CD. Requires Mg(2+) as cofactor. Specific enzymatic cleavages in vivo by the viral proteases yield processing intermediates and the mature proteins. Post-translationally, myristoylation is required for the formation of pentamers during virus assembly. Further assembly of 12 pentamers and a molecule of genomic RNA generates the provirion. In terms of processing, during virion maturation, immature virions are rendered infectious following cleavage of VP0 into VP4 and VP2. This maturation seems to be an autocatalytic event triggered by the presence of RNA in the capsid and it is followed by a conformational change infectious virion. Myristoylation is required during RNA encapsidation and formation of the mature virus particle. Post-translationally, VPg is uridylylated by the polymerase into VPg-pUpU. This acts as a nucleotide-peptide primer for the genomic RNA replication.

It is found in the virion. It localises to the host cytoplasm. The protein resides in the host cytoplasmic vesicle membrane. Its subcellular location is the host nucleus. It carries out the reaction a ribonucleoside 5'-triphosphate + H2O = a ribonucleoside 5'-diphosphate + phosphate + H(+). It catalyses the reaction Selective cleavage of Tyr-|-Gly bond in the picornavirus polyprotein.. The enzyme catalyses RNA(n) + a ribonucleoside 5'-triphosphate = RNA(n+1) + diphosphate. The catalysed reaction is Selective cleavage of Gln-|-Gly bond in the poliovirus polyprotein. In other picornavirus reactions Glu may be substituted for Gln, and Ser or Thr for Gly.. Replication or transcription is subject to high level of random mutations by the nucleotide analog ribavirin. In terms of biological role, forms an icosahedral capsid of pseudo T=3 symmetry with capsid proteins VP2 and VP3. The capsid is 300 Angstroms in diameter, composed of 60 copies of each capsid protein and enclosing the viral positive strand RNA genome. Capsid protein VP1 mainly forms the vertices of the capsid. Capsid protein VP1 interacts with host cell receptor to provide virion attachment to target host cells. This attachment induces virion internalization. Tyrosine kinases are probably involved in the entry process. After binding to its receptor, the capsid undergoes conformational changes. Capsid protein VP1 N-terminus (that contains an amphipathic alpha-helix) and capsid protein VP4 are externalized. Together, they shape a pore in the host membrane through which viral genome is translocated to host cell cytoplasm. Functionally, forms an icosahedral capsid of pseudo T=3 symmetry with capsid proteins VP2 and VP3. The capsid is 300 Angstroms in diameter, composed of 60 copies of each capsid protein and enclosing the viral positive strand RNA genome. Its function is as follows. Lies on the inner surface of the capsid shell. After binding to the host receptor, the capsid undergoes conformational changes. Capsid protein VP4 is released, Capsid protein VP1 N-terminus is externalized, and together, they shape a pore in the host membrane through which the viral genome is translocated into the host cell cytoplasm. Component of immature procapsids, which is cleaved into capsid proteins VP4 and VP2 after maturation. Allows the capsid to remain inactive before the maturation step. In terms of biological role, cysteine protease that cleaves viral polyprotein and specific host proteins. It is responsible for the autocatalytic cleavage between the P1 and P2 regions, which is the first cleavage occurring in the polyprotein. Also cleaves the host translation initiation factor EIF4G1, in order to shut down the capped cellular mRNA translation. Inhibits the host nucleus-cytoplasm protein and RNA trafficking by cleaving host members of the nuclear pores. Counteracts stress granule formation probably by antagonizing its assembly or promoting its dissassembly. Functionally, plays an essential role in the virus replication cycle by acting as a viroporin. Creates a pore in the host endoplasmic reticulum and as a consequence releases Ca2+ in the cytoplasm of infected cell. In turn, high levels of cytoplasmic calcium may trigger membrane trafficking and transport of viral ER-associated proteins to viroplasms, sites of viral genome replication. Its function is as follows. Induces and associates with structural rearrangements of intracellular membranes. Displays RNA-binding, nucleotide binding and NTPase activities. May play a role in virion morphogenesis and viral RNA encapsidation by interacting with the capsid protein VP3. Localizes the viral replication complex to the surface of membranous vesicles. Together with protein 3CD binds the Cis-Active RNA Element (CRE) which is involved in RNA synthesis initiation. Acts as a cofactor to stimulate the activity of 3D polymerase, maybe through a nucleid acid chaperone activity. In terms of biological role, localizes the viral replication complex to the surface of membranous vesicles. It inhibits host cell endoplasmic reticulum-to-Golgi apparatus transport and causes the disassembly of the Golgi complex, possibly through GBF1 interaction. This would result in depletion of MHC, trail receptors and IFN receptors at the host cell surface. Plays an essential role in viral RNA replication by recruiting ACBD3 and PI4KB at the viral replication sites, thereby allowing the formation of the rearranged membranous structures where viral replication takes place. Functionally, acts as a primer for viral RNA replication and remains covalently bound to viral genomic RNA. VPg is uridylylated prior to priming replication into VPg-pUpU. The oriI viral genomic sequence may act as a template for this. The VPg-pUpU is then used as primer on the genomic RNA poly(A) by the RNA-dependent RNA polymerase to replicate the viral genome. During genome replication, the VPg-RNA linkage is removed by the host TDP2, thereby accelerating replication. During the late stage of the replication cycle, host TDP2 is excluded from sites of viral RNA synthesis and encapsidation, allowing for the generation of progeny virions. Its function is as follows. Involved in the viral replication complex and viral polypeptide maturation. It exhibits protease activity with a specificity and catalytic efficiency that is different from protease 3C. Protein 3CD binds to the 5'UTR of the viral genome. Replicates the viral genomic RNA on the surface of intracellular membranes. May form linear arrays of subunits that propagate along a strong head-to-tail interaction called interface-I. Covalently attaches UMP to a tyrosine of VPg, which is used to prime RNA synthesis. The positive stranded RNA genome is first replicated at virus induced membranous vesicles, creating a dsRNA genomic replication form. This dsRNA is then used as template to synthesize positive stranded RNA genomes. ss(+)RNA genomes are either translated, replicated or encapsidated. In terms of biological role, major viral protease that mediates proteolytic processing of the polyprotein. Cleaves host EIF5B, contributing to host translation shutoff. Also cleaves host PABPC1, contributing to host translation shutoff. Cleaves host NLRP1, triggers host N-glycine-mediated degradation of the autoinhibitory NLRP1 N-terminal fragment. This Echovirus 6 (strain Charles) protein is Genome polyprotein.